Consider the following 261-residue polypeptide: tRNA pseudouridine synthase A (261 aa).

Asp-51 serves as the catalytic Nucleophile. Tyr-109 provides a ligand contact to substrate.

It belongs to the tRNA pseudouridine synthase TruA family. Homodimer.

The enzyme catalyses uridine(38/39/40) in tRNA = pseudouridine(38/39/40) in tRNA. Functionally, formation of pseudouridine at positions 38, 39 and 40 in the anticodon stem and loop of transfer RNAs. This chain is tRNA pseudouridine synthase A, found in Shewanella frigidimarina (strain NCIMB 400).